The chain runs to 146 residues: Large ribosomal subunit protein uL15 (146 aa).

A compositionally biased stretch (basic and acidic residues) spans 1–13 (MKLHELKAAEGSR). Residues 1 to 61 (MKLHELKAAE…GGQTPLFRRM (61 aa)) form a disordered region. 2 stretches are compositionally biased toward gly residues: residues 23–35 (TSSGNGKTSGRGQ) and 42–52 (SGGGVRLGFEG).

This sequence belongs to the universal ribosomal protein uL15 family. In terms of assembly, part of the 50S ribosomal subunit.

Binds to the 23S rRNA. The sequence is that of Large ribosomal subunit protein uL15 from Streptococcus uberis (strain ATCC BAA-854 / 0140J).